The chain runs to 159 residues: MDIRTGNGFDVHAFGPGDHVWLCGVRVPHHRGLIGHSDADVGMHALTDAIYGALAEGDIGVHFPPSDPQWKGAASRIFLEHAMGRIAARGFTLANCDVTLICERPKIGPMAPAMREALAAIMGVEVGRISVKATTSEKLGFTGREEGIACIATATLLQA.

A divalent metal cation-binding residues include Asp-10 and His-12. 4-CDP-2-C-methyl-D-erythritol 2-phosphate-binding positions include 10-12 and 36-37; these read DVH and HS. Position 44 (His-44) interacts with a divalent metal cation. 4-CDP-2-C-methyl-D-erythritol 2-phosphate-binding positions include 58–60, 134–137, Phe-141, and Arg-144; these read DIG and TTSE.

This sequence belongs to the IspF family. As to quaternary structure, homotrimer. A divalent metal cation is required as a cofactor.

It carries out the reaction 4-CDP-2-C-methyl-D-erythritol 2-phosphate = 2-C-methyl-D-erythritol 2,4-cyclic diphosphate + CMP. Its pathway is isoprenoid biosynthesis; isopentenyl diphosphate biosynthesis via DXP pathway; isopentenyl diphosphate from 1-deoxy-D-xylulose 5-phosphate: step 4/6. In terms of biological role, involved in the biosynthesis of isopentenyl diphosphate (IPP) and dimethylallyl diphosphate (DMAPP), two major building blocks of isoprenoid compounds. Catalyzes the conversion of 4-diphosphocytidyl-2-C-methyl-D-erythritol 2-phosphate (CDP-ME2P) to 2-C-methyl-D-erythritol 2,4-cyclodiphosphate (ME-CPP) with a corresponding release of cytidine 5-monophosphate (CMP). The protein is 2-C-methyl-D-erythritol 2,4-cyclodiphosphate synthase of Cereibacter sphaeroides (strain ATCC 17025 / ATH 2.4.3) (Rhodobacter sphaeroides).